The primary structure comprises 22 residues: Peptide PGLa-B1 (22 aa).

Leucine amide is present on Leu-22.

Expressed by the skin glands.

It is found in the secreted. Its function is as follows. Has antibacterial and antifungal activity. The sequence is that of Peptide PGLa-B1 from Xenopus borealis (Kenyan clawed frog).